The chain runs to 43 residues: Pre-protein VI (43 aa).

The propeptide occupies 1 to 33 (MEGINFSALAPRYGSRPMLSSWSDIGTSSMNGG).

This sequence belongs to the adenoviridae protein VI family. As to quaternary structure, interacts with hexon protein; this interaction allows nuclear import of hexon trimers and possibly pre-capsid assembly. Interacts (via C-terminal NLS) with importin alpha/beta. In terms of assembly, interacts (via PPxY motif) with host NEDD4 ubiquitine ligase; this interaction might play a role in virus intracellular transport during entry. Part of a complex composed of the core-capsid bridging protein, the endosome lysis protein VI and the hexon-linking protein VIII; these interactions bridge the virus core to the capsid. Interacts with peripentonal hexons; this interaction stabilizes the capsid by gluing two peripentonal hexons together and joining them with an adjacent group-of-nine hexon. Protease cofactor: Heterodimer with the viral protease; disulfide-linked. Interacts with the viral protease. In terms of processing, ubiquitinated by Nedd4 following partial capsid disassembly; which might play a role in intracellular virus movement during entry. Protease cofactor: Contains the major nuclear import and export signals. Proteolytically removed during virion maturation. The processing of the C-terminus turns the precursor into a mature viral structural protein and abrogates its ability to promote hexon import and act as a potential chaperone protein.

The protein localises to the host nucleus. The protein resides in the host cytoplasm. It localises to the virion. Functionally, during virus assembly, promotes hexon trimers nuclear import through nuclear pore complexes via an importin alpha/beta-dependent mechanism. By analogy to herpesviruses capsid assembly, might act as a chaperone to promote the formation of the icosahedral capsid. Structural component of the virion that provides increased stability to the particle shell through its interaction with the core-capsid bridging protein and the hexon-linking protein VIII. Fibers shedding during virus entry into host cell allows the endosome lysis protein to be exposed as a membrane-lytic peptide. Exhibits pH-independent membrane fragmentation activity and probably mediates viral rapid escape from host endosome via organellar membrane lysis. It is not clear if it then remains partially associated with the capsid and involved in the intracellular microtubule-dependent transport of capsid to the nucleus, or if it is lost during endosomal penetration. The chain is Pre-protein VI from Bovine adenovirus 2 (BAdV-2).